The sequence spans 154 residues: Probable cyclic pyranopterin monophosphate synthase (154 aa).

Substrate is bound by residues 74–76 and 110–111; these read LCH and ME. Aspartate 125 is a catalytic residue.

The protein belongs to the MoaC family. In terms of assembly, homohexamer; trimer of dimers.

The enzyme catalyses (8S)-3',8-cyclo-7,8-dihydroguanosine 5'-triphosphate = cyclic pyranopterin phosphate + diphosphate. It participates in cofactor biosynthesis; molybdopterin biosynthesis. Functionally, catalyzes the conversion of (8S)-3',8-cyclo-7,8-dihydroguanosine 5'-triphosphate to cyclic pyranopterin monophosphate (cPMP). In Methanosphaerula palustris (strain ATCC BAA-1556 / DSM 19958 / E1-9c), this protein is Probable cyclic pyranopterin monophosphate synthase.